Consider the following 370-residue polypeptide: MQFELLAQHGAARRGRLTLAHGTVDTPAFMPVGTYGTVKAMTPAALADTGAQICLGNTFHLWLRPGLDVVAAHGGLHRFMNWDRPILTDSGGFQVFSLGALRKISEEGVKFASPIDGAKLFLTPEESMRIQTVLNSDIAMIFDECTPHPATHDEAAKSMQLSLRWARRSRDEFDRLANPNALFGIVQGGMFEDLRDESLAALDAIGFSGYAIGGLSVGEPKEDMARILAHTAPRLPAGRPRYLMGVGTPEDIVAGVAAGIDMFDCVMPTRNARNGWLFTRYGDIKIKNATHKQDTRPLDPSCDCYTCRNFSRAYLHHLHRAGEILGSMLNTIHNLRYYQTLTAELRAAIAAGDLDSHAARFRADRSTGAC.

Asp89 serves as the catalytic Proton acceptor. Residues 89–93 (DSGGF), Asp143, Gln187, and Gly214 contribute to the substrate site. Residues 245 to 251 (GVGTPED) form an RNA binding region. The active-site Nucleophile is Asp264. The interval 269 to 273 (TRNAR) is RNA binding; important for wobble base 34 recognition. Positions 302, 304, 307, and 333 each coordinate Zn(2+).

Belongs to the queuine tRNA-ribosyltransferase family. As to quaternary structure, homodimer. Within each dimer, one monomer is responsible for RNA recognition and catalysis, while the other monomer binds to the replacement base PreQ1. Zn(2+) is required as a cofactor.

The enzyme catalyses 7-aminomethyl-7-carbaguanine + guanosine(34) in tRNA = 7-aminomethyl-7-carbaguanosine(34) in tRNA + guanine. It functions in the pathway tRNA modification; tRNA-queuosine biosynthesis. Catalyzes the base-exchange of a guanine (G) residue with the queuine precursor 7-aminomethyl-7-deazaguanine (PreQ1) at position 34 (anticodon wobble position) in tRNAs with GU(N) anticodons (tRNA-Asp, -Asn, -His and -Tyr). Catalysis occurs through a double-displacement mechanism. The nucleophile active site attacks the C1' of nucleotide 34 to detach the guanine base from the RNA, forming a covalent enzyme-RNA intermediate. The proton acceptor active site deprotonates the incoming PreQ1, allowing a nucleophilic attack on the C1' of the ribose to form the product. After dissociation, two additional enzymatic reactions on the tRNA convert PreQ1 to queuine (Q), resulting in the hypermodified nucleoside queuosine (7-(((4,5-cis-dihydroxy-2-cyclopenten-1-yl)amino)methyl)-7-deazaguanosine). This Aromatoleum aromaticum (strain DSM 19018 / LMG 30748 / EbN1) (Azoarcus sp. (strain EbN1)) protein is Queuine tRNA-ribosyltransferase.